A 252-amino-acid chain; its full sequence is Probable endonuclease 4 (252 aa).

H56, H96, E129, D162, H165, H191, D204, H206, and E233 together coordinate Zn(2+).

The protein belongs to the AP endonuclease 2 family. Requires Zn(2+) as cofactor.

It catalyses the reaction Endonucleolytic cleavage to 5'-phosphooligonucleotide end-products.. Its function is as follows. Endonuclease IV plays a role in DNA repair. It cleaves phosphodiester bonds at apurinic or apyrimidinic (AP) sites, generating a 3'-hydroxyl group and a 5'-terminal sugar phosphate. The sequence is that of Probable endonuclease 4 from Mycobacterium tuberculosis (strain ATCC 25177 / H37Ra).